Consider the following 354-residue polypeptide: D-alanine--D-alanine ligase (354 aa).

Residues 154 to 348 (RSWFLTNNIN…FTNLIEEIIK (195 aa)) enclose the ATP-grasp domain. 181-232 (MKRPYVIKPITQGSSIGIEVIFEEDDFNFANYDFPYGDQVIIEKYIKGRELQ) provides a ligand contact to ATP. Positions 301, 315, and 317 each coordinate Mg(2+).

It belongs to the D-alanine--D-alanine ligase family. It depends on Mg(2+) as a cofactor. Requires Mn(2+) as cofactor.

It is found in the cytoplasm. It catalyses the reaction 2 D-alanine + ATP = D-alanyl-D-alanine + ADP + phosphate + H(+). Its pathway is cell wall biogenesis; peptidoglycan biosynthesis. Functionally, cell wall formation. The sequence is that of D-alanine--D-alanine ligase from Rickettsia canadensis (strain McKiel).